We begin with the raw amino-acid sequence, 749 residues long: Transcription factor RFX3 (749 aa).

The segment at residues 183–258 (HLQWLLDNYE…YHYYGIRVKP (76 aa)) is a DNA-binding region (RFX-type winged-helix). The segment at 663–699 (VSPGNLDKDEGSEVESEMDEELDDSSEPQAKREKTEL) is disordered. A compositionally biased stretch (acidic residues) spans 674 to 688 (SEVESEMDEELDDSS).

The protein belongs to the RFX family. Heterodimer; heterodimerizes with RFX1 and RFX2, and RFX6.

It localises to the nucleus. Transcription factor required for ciliogenesis and islet cell differentiation during endocrine pancreas development. Essential for the differentiation of nodal monocilia and left-right asymmetry specification during embryogenesis. Required for the biogenesis of motile cilia by governing growth and beating efficiency of motile cells. Also required for ciliated ependymal cell differentiation. Regulates the expression of genes involved in ciliary assembly (DYNC2LI1, FOXJ1 and BBS4) and genes involved in ciliary motility (DNAH11, DNAH9 and DNAH5). Together with RFX6, participates in the differentiation of 4 of the 5 islet cell types during endocrine pancreas development, with the exception of pancreatic PP (polypeptide-producing) cells. Regulates transcription by forming a heterodimer with another RFX protein and binding to the X-box in the promoter of target genes. Represses transcription of MAP1A in non-neuronal cells but not in neuronal cells. The chain is Transcription factor RFX3 (RFX3) from Macaca fascicularis (Crab-eating macaque).